The sequence spans 621 residues: tRNA uridine 5-carboxymethylaminomethyl modification enzyme MnmG (621 aa).

9–14 (GGGHAG) provides a ligand contact to FAD. An NAD(+)-binding site is contributed by 270–284 (GPRYCPSIEDKIVKF).

This sequence belongs to the MnmG family. As to quaternary structure, homodimer. Heterotetramer of two MnmE and two MnmG subunits. FAD serves as cofactor.

Its subcellular location is the cytoplasm. NAD-binding protein involved in the addition of a carboxymethylaminomethyl (cmnm) group at the wobble position (U34) of certain tRNAs, forming tRNA-cmnm(5)s(2)U34. This Borrelia garinii subsp. bavariensis (strain ATCC BAA-2496 / DSM 23469 / PBi) (Borreliella bavariensis) protein is tRNA uridine 5-carboxymethylaminomethyl modification enzyme MnmG.